Reading from the N-terminus, the 143-residue chain is MFPKIKQTSKNYNGKEIQAISMRFSNQITILVTISGKIGQMYMMTYEKSVMSPVSITGDMSTLPEIGVRTLLGGGGEDDIKSHWAQITAGQVGSLLARQQMLVRPDVRIPRVCLGLHVPWTDDNEKNGDLTVVILELVKEICF.

The protein resides in the cytoplasm. Its subcellular location is the nucleus. This is an uncharacterized protein from Schizosaccharomyces pombe (strain 972 / ATCC 24843) (Fission yeast).